A 514-amino-acid polypeptide reads, in one-letter code: Probable WRKY transcription factor 4 (514 aa).

Disordered stretches follow at residues 1–28 (MSEKEEAPSTSKSTGAPSRPTLSLPPRP), 175–204 (QPQTEYPPPSQVQSFSSGQAQIPTSAPLPA), and 278–394 (YKGQ…TVTE). 2 stretches are compositionally biased toward polar residues: residues 185 to 198 (QVQSFSSGQAQIPT) and 286 to 299 (PPQNTKRGNKDNTA). A DNA-binding region (WRKY 1) is located at residues 223-287 (NVDKPADDGY…YKGQHNHEPP (65 aa)). A compositionally biased stretch (low complexity) spans 300–313 (NINGSSINNNRGSS). A compositionally biased stretch (polar residues) spans 315–326 (LGASQFQTNSSN). Basic and acidic residues predominate over residues 359–380 (TDVREKDENEPDPKRRSTEVRI). Positions 403–468 (SEVDLLDDGY…YEGKHNHDLP (66 aa)) form a DNA-binding region, WRKY 2. Zn(2+) is bound by residues C434, T436, C439, H463, and H465. Residues 464–514 (NHDLPAAKSSSHAAAAAQLRPDNRPGGLANLNQQQQQQPVARLRLKEEQTT) form a disordered region. Low complexity predominate over residues 469-480 (AAKSSSHAAAAA).

As to expression, in young, mature and senescent leaves.

The protein resides in the nucleus. Functionally, transcription factor that binds specifically to the W box (5'-(T)TGAC[CT]-3'), a frequently occurring elicitor-responsive cis-acting element. Has a positive role in resistance to necrotrophic pathogens (e.g. Botrytis cinerea), but a negative effect on plant resistance to biotrophic pathogens (e.g. Pseudomonas syringae). The sequence is that of Probable WRKY transcription factor 4 (WRKY4) from Arabidopsis thaliana (Mouse-ear cress).